The sequence spans 635 residues: Threonine--tRNA ligase (635 aa).

Positions 1–61 (MVSIRLPDGS…DRDASLAIVT (61 aa)) constitute a TGS domain. The catalytic stretch occupies residues 242-533 (DHRKLGKQLD…LIEHHAGAMP (292 aa)). Cys-333, His-384, and His-510 together coordinate Zn(2+).

The protein belongs to the class-II aminoacyl-tRNA synthetase family. Homodimer. The cofactor is Zn(2+).

It is found in the cytoplasm. The catalysed reaction is tRNA(Thr) + L-threonine + ATP = L-threonyl-tRNA(Thr) + AMP + diphosphate + H(+). Its function is as follows. Catalyzes the attachment of threonine to tRNA(Thr) in a two-step reaction: L-threonine is first activated by ATP to form Thr-AMP and then transferred to the acceptor end of tRNA(Thr). Also edits incorrectly charged L-seryl-tRNA(Thr). The sequence is that of Threonine--tRNA ligase from Burkholderia pseudomallei (strain 1106a).